Consider the following 458-residue polypeptide: Ribosomal protein uS12 methylthiotransferase RimO (458 aa).

Positions 6-116 (PKVGFVSLGC…VMEAVHAALP (111 aa)) constitute an MTTase N-terminal domain. [4Fe-4S] cluster-binding residues include Cys-15, Cys-51, Cys-80, Cys-147, Cys-151, and Cys-154. One can recognise a Radical SAM core domain in the interval 133 to 371 (LTPRHYAYLK…AKQAQISALR (239 aa)). The TRAM domain occupies 373–441 (ESKIGSVQQC…EHDLFGDALP (69 aa)).

Belongs to the methylthiotransferase family. RimO subfamily. Requires [4Fe-4S] cluster as cofactor.

It is found in the cytoplasm. It catalyses the reaction L-aspartate(89)-[ribosomal protein uS12]-hydrogen + (sulfur carrier)-SH + AH2 + 2 S-adenosyl-L-methionine = 3-methylsulfanyl-L-aspartate(89)-[ribosomal protein uS12]-hydrogen + (sulfur carrier)-H + 5'-deoxyadenosine + L-methionine + A + S-adenosyl-L-homocysteine + 2 H(+). Its function is as follows. Catalyzes the methylthiolation of an aspartic acid residue of ribosomal protein uS12. This chain is Ribosomal protein uS12 methylthiotransferase RimO, found in Xanthomonas euvesicatoria pv. vesicatoria (strain 85-10) (Xanthomonas campestris pv. vesicatoria).